Consider the following 98-residue polypeptide: Aspartyl/glutamyl-tRNA(Asn/Gln) amidotransferase subunit C (98 aa).

Belongs to the GatC family. As to quaternary structure, heterotrimer of A, B and C subunits.

It carries out the reaction L-glutamyl-tRNA(Gln) + L-glutamine + ATP + H2O = L-glutaminyl-tRNA(Gln) + L-glutamate + ADP + phosphate + H(+). It catalyses the reaction L-aspartyl-tRNA(Asn) + L-glutamine + ATP + H2O = L-asparaginyl-tRNA(Asn) + L-glutamate + ADP + phosphate + 2 H(+). In terms of biological role, allows the formation of correctly charged Asn-tRNA(Asn) or Gln-tRNA(Gln) through the transamidation of misacylated Asp-tRNA(Asn) or Glu-tRNA(Gln) in organisms which lack either or both of asparaginyl-tRNA or glutaminyl-tRNA synthetases. The reaction takes place in the presence of glutamine and ATP through an activated phospho-Asp-tRNA(Asn) or phospho-Glu-tRNA(Gln). The protein is Aspartyl/glutamyl-tRNA(Asn/Gln) amidotransferase subunit C of Micrococcus luteus (strain ATCC 4698 / DSM 20030 / JCM 1464 / CCM 169 / CCUG 5858 / IAM 1056 / NBRC 3333 / NCIMB 9278 / NCTC 2665 / VKM Ac-2230) (Micrococcus lysodeikticus).